We begin with the raw amino-acid sequence, 332 residues long: Phosphoenolpyruvate transferase (332 aa).

Asp63 is a binding site for 7,8-didemethyl-8-hydroxy-5-deazariboflavin.

It belongs to the CofD family. Homodimer. It depends on Mg(2+) as a cofactor.

The enzyme catalyses enolpyruvoyl-2-diphospho-5'-guanosine + 7,8-didemethyl-8-hydroxy-5-deazariboflavin = dehydro coenzyme F420-0 + GMP + H(+). Its pathway is cofactor biosynthesis; coenzyme F420 biosynthesis. Functionally, catalyzes the transfer of the phosphoenolpyruvate moiety from enoylpyruvoyl-2-diphospho-5'-guanosine (EPPG) to 7,8-didemethyl-8-hydroxy-5-deazariboflavin (FO) with the formation of dehydro coenzyme F420-0 and GMP. The protein is Phosphoenolpyruvate transferase of Nocardia farcinica (strain IFM 10152).